A 122-amino-acid polypeptide reads, in one-letter code: Large ribosomal subunit protein uL14 (122 aa).

It belongs to the universal ribosomal protein uL14 family. Part of the 50S ribosomal subunit. Forms a cluster with proteins L3 and L19. In the 70S ribosome, L14 and L19 interact and together make contacts with the 16S rRNA in bridges B5 and B8.

Functionally, binds to 23S rRNA. Forms part of two intersubunit bridges in the 70S ribosome. The polypeptide is Large ribosomal subunit protein uL14 (Bacillus mycoides (strain KBAB4) (Bacillus weihenstephanensis)).